Reading from the N-terminus, the 430-residue chain is Glutamyl-tRNA reductase 1 (430 aa).

Residues T49–R52, S109, E114–Q116, and Q120 each bind substrate. C50 acts as the Nucleophile in catalysis. G189–A194 serves as a coordination point for NADP(+).

Belongs to the glutamyl-tRNA reductase family. As to quaternary structure, homodimer.

It catalyses the reaction (S)-4-amino-5-oxopentanoate + tRNA(Glu) + NADP(+) = L-glutamyl-tRNA(Glu) + NADPH + H(+). It participates in porphyrin-containing compound metabolism; protoporphyrin-IX biosynthesis; 5-aminolevulinate from L-glutamyl-tRNA(Glu): step 1/2. Catalyzes the NADPH-dependent reduction of glutamyl-tRNA(Glu) to glutamate 1-semialdehyde (GSA). This chain is Glutamyl-tRNA reductase 1, found in Nocardioides sp. (strain ATCC BAA-499 / JS614).